The sequence spans 900 residues: MMMVMQPEGLGAGEGPFSGGGGGEYMEQEEDWDRDLLLDPAWEKQQRKTFTAWCNSHLRKAGTQIENIEEDFRNGLKLMLLLEVISGERLPRPDKGKMRFHKIANVNKALDFIASKGVKLVSIGAEEIVDGNLKMTLGMIWTIILRFAIQDISVEETSAKEGLLLWCQRKTAPYRNVNVQNFHTSWKDGLALCALIHRHRPDLIDYAKLRKDDPIGNLNTAFEVAEKYLDIPKMLDAEDIVNTPKPDEKAIMTYVSCFYHAFAGAEQAETAANRICKVLAVNQENEKLMEEYEKLASELLEWIRRTVPWLENRVGEPSMSAMQRKLEDFRDYRRLHKPPRVQEKCQLEINFNTLQTKLRLSHRPAFMPSEGKLVSDIANAWRGLEQVEKGYEDWLLSEIRRLQRLQHLAEKFQQKASLHEAWTRGKEEMLNQHDYESASLQEVRALLRRHEAFESDLAAHQDRVEHIAALAQELNELDYHEAASVNSRCQAICDQWDNLGTLTQKRRDALERMEKLLETIDQLQLEFARRAAPFNNWLDGAIEDLQDVWLVHSVEETQSLLTAHEQFKATLPEADRERGAILGIQGEIQKICQTYGLRPKSGNPYITLSSQDINNKWDTVRKLVPSRDQTLQEELARQQVNERLRRQFAAQANAIGPWIQGKVEEVGRLAAGLAGSLEEQMAGLRQQEQNIINYKSNIDRLEGDHQLLQESLVFDNKHTVYSMEHIRVGWEQLLTSIARTINEVENQVLTRDAKGLSQEQLNEFRASFNHFDRKRNGMMEPDDFRACLISMGYDLGEVEFARIMTMVDPNAAGVVTFQAFIDFMTRETAETDTAEQVVASFKILAGDKNYITPEELRRELPAEQAEYCIRRMAPYKGSGAPSGALDYVAFSSALYGESDL.

The residue at position 1 (M1) is an N-acetylmethionine. The segment at 1 to 26 (MMMVMQPEGLGAGEGPFSGGGGGEYM) is disordered. Residues 1-260 (MMMVMQPEGL…IMTYVSCFYH (260 aa)) form an actin-binding region. The span at 10–24 (LGAGEGPFSGGGGGE) shows a compositional bias: gly residues. Calponin-homology (CH) domains follow at residues 44–148 (KQQR…LRFA) and 157–263 (TSAK…HAFA). Spectrin repeat units lie at residues 287-397 (KLME…WLLS), 407-512 (HLAE…ALER), 522-633 (QLQL…TLQE), and 643-746 (RLRR…EVEN). EF-hand domains follow at residues 759–794 (EQLNEFRASFNHFDRKRNGMMEPDDFRACLISMGYD) and 795–830 (LGEVEFARIMTMVDPNAAGVVTFQAFIDFMTRETAE). 6 residues coordinate Ca(2+): D772, N776, M778, D783, D808, and N810.

Belongs to the alpha-actinin family. As to quaternary structure, homodimer; antiparallel. Also forms heterodimers with ACTN2. Interacts with MYOZ1. Expression restricted to skeletal muscle fast (type 2) fibers (at protein level).

In terms of biological role, F-actin cross-linking protein which is thought to anchor actin to a variety of intracellular structures. This is a bundling protein. This is Alpha-actinin-3 (Actn3) from Mus musculus (Mouse).